A 182-amino-acid chain; its full sequence is Large ribosomal subunit protein uL10 (182 aa).

It belongs to the universal ribosomal protein uL10 family. In terms of assembly, part of the ribosomal stalk of the 50S ribosomal subunit. The N-terminus interacts with L11 and the large rRNA to form the base of the stalk. The C-terminus forms an elongated spine to which L12 dimers bind in a sequential fashion forming a multimeric L10(L12)X complex.

Forms part of the ribosomal stalk, playing a central role in the interaction of the ribosome with GTP-bound translation factors. The polypeptide is Large ribosomal subunit protein uL10 (Microcystis aeruginosa (strain NIES-843 / IAM M-2473)).